The primary structure comprises 355 residues: 3-dehydroquinate synthase (355 aa).

Residues 71–76, 105–109, 129–130, lysine 142, and lysine 151 each bind NAD(+); these read EGEERK, GVVGD, and TS. 3 residues coordinate Zn(2+): glutamate 184, histidine 246, and histidine 263.

It belongs to the sugar phosphate cyclases superfamily. Dehydroquinate synthase family. The cofactor is Co(2+). Requires Zn(2+) as cofactor. NAD(+) serves as cofactor.

The protein localises to the cytoplasm. The enzyme catalyses 7-phospho-2-dehydro-3-deoxy-D-arabino-heptonate = 3-dehydroquinate + phosphate. It participates in metabolic intermediate biosynthesis; chorismate biosynthesis; chorismate from D-erythrose 4-phosphate and phosphoenolpyruvate: step 2/7. In terms of biological role, catalyzes the conversion of 3-deoxy-D-arabino-heptulosonate 7-phosphate (DAHP) to dehydroquinate (DHQ). The protein is 3-dehydroquinate synthase of Streptococcus pneumoniae (strain JJA).